The sequence spans 230 residues: Large ribosomal subunit protein uL1 (230 aa).

It belongs to the universal ribosomal protein uL1 family. In terms of assembly, part of the 50S ribosomal subunit.

Functionally, binds directly to 23S rRNA. The L1 stalk is quite mobile in the ribosome, and is involved in E site tRNA release. Protein L1 is also a translational repressor protein, it controls the translation of the L11 operon by binding to its mRNA. The polypeptide is Large ribosomal subunit protein uL1 (Limosilactobacillus reuteri subsp. reuteri (strain JCM 1112) (Lactobacillus reuteri)).